Here is a 170-residue protein sequence, read N- to C-terminus: Transcriptional repressor NrdR (170 aa).

Residues 3-34 (CPFCRHPDSRVVDSRVTDDGTAIRRRRSCPEC) fold into a zinc finger. One can recognise an ATP-cone domain in the interval 46–136 (LSVIKRSGVI…VYRGFESLED (91 aa)). The disordered stretch occupies residues 151–170 (ERSETVERGRPVPSRGVDDR).

Belongs to the NrdR family. It depends on Zn(2+) as a cofactor.

In terms of biological role, negatively regulates transcription of bacterial ribonucleotide reductase nrd genes and operons by binding to NrdR-boxes. The protein is Transcriptional repressor NrdR of Acidothermus cellulolyticus (strain ATCC 43068 / DSM 8971 / 11B).